A 125-amino-acid polypeptide reads, in one-letter code: Fluoride-specific ion channel FluC (125 aa).

Helical transmembrane passes span 36–56 (GTIF…FLSI), 65–85 (FILF…TFAY), and 99–119 (IIYF…GMFL). Na(+)-binding residues include glycine 75 and threonine 78.

It belongs to the fluoride channel Fluc/FEX (TC 1.A.43) family.

Its subcellular location is the cell inner membrane. The catalysed reaction is fluoride(in) = fluoride(out). Na(+) is not transported, but it plays an essential structural role and its presence is essential for fluoride channel function. Fluoride-specific ion channel. Important for reducing fluoride concentration in the cell, thus reducing its toxicity. This Thermosipho africanus (strain TCF52B) protein is Fluoride-specific ion channel FluC.